A 185-amino-acid polypeptide reads, in one-letter code: UPF0200 protein Mevan_0592 (185 aa).

ATP is bound at residue 8–15 (GMPGSGKS).

The protein belongs to the UPF0200 family.

The polypeptide is UPF0200 protein Mevan_0592 (Methanococcus vannielii (strain ATCC 35089 / DSM 1224 / JCM 13029 / OCM 148 / SB)).